Here is a 106-residue protein sequence, read N- to C-terminus: Iron-sulfur cluster assembly protein CyaY (106 aa).

This sequence belongs to the frataxin family.

In terms of biological role, involved in iron-sulfur (Fe-S) cluster assembly. May act as a regulator of Fe-S biogenesis. The sequence is that of Iron-sulfur cluster assembly protein CyaY from Escherichia coli O6:H1 (strain CFT073 / ATCC 700928 / UPEC).